The chain runs to 420 residues: Protein-lysine N-trimethyltransferase SMYD5 (420 aa).

Positions alanine 29–leucine 358 constitute an SET domain. The MYND-type zinc finger occupies proline 104–cysteine 142. Residue tyrosine 357 participates in S-adenosyl-L-methionine binding. Positions aspartate 392–valine 420 are disordered.

This sequence belongs to the class V-like SAM-binding methyltransferase superfamily.

The protein localises to the cytoplasm. It catalyses the reaction L-lysyl-[protein] + 3 S-adenosyl-L-methionine = N(6),N(6),N(6)-trimethyl-L-lysyl-[protein] + 3 S-adenosyl-L-homocysteine + 3 H(+). It carries out the reaction L-lysyl(20)-[histone H4] + 3 S-adenosyl-L-methionine = N(6),N(6),N(6)-trimethyl-L-lysyl(20)-[histone H4] + 3 S-adenosyl-L-homocysteine + 3 H(+). The enzyme catalyses L-lysyl(36)-[histone H3] + 3 S-adenosyl-L-methionine = N(6),N(6),N(6)-trimethyl-L-lysyl(36)-[histone H3] + 3 S-adenosyl-L-homocysteine + 3 H(+). In terms of biological role, protein-lysine N-trimethyltransferase that specifically catalyzes trimethylation of 'Lys-22' of the RPL40/eL40 subunit of the 60S ribosome, thereby promoting translation elongation and protein synthesis. May also act as a histone methyltransferase in the context of histone octamers, but not on nucleosome substrates: trimethylates 'Lys-36' of histone H3 and 'Lys-20' of histone H4 to form H3K36me3 and H4K20me3, respectively. The histone methyltransferase activity, which is independent of its SET domain, is however unsure in vivo. This chain is Protein-lysine N-trimethyltransferase SMYD5 (SMYD5), found in Gallus gallus (Chicken).